The primary structure comprises 470 residues: Glutathione reductase (470 aa).

Residues Ser-16 and Gly-17 each coordinate FAD. Ser-16 is a glutathione binding site. Arg-23 provides a ligand contact to glutathione. Positions 36, 43, 44, and 52 each coordinate FAD. Cys-44 and Cys-49 are joined by a disulfide. Tyr-104 is a binding site for glutathione. Ala-120 provides a ligand contact to FAD. NADP(+) is bound by residues Gly-190, Ile-193, Glu-196, Arg-213, and Arg-219. Residue Thr-228 participates in glutathione binding. NADP(+) is bound at residue Gly-280. Asp-321 contacts FAD. Glu-327 lines the NADP(+) pocket. Position 329 (Thr-329) interacts with FAD. Arg-337 contacts glutathione. Ala-362 lines the NADP(+) pocket. Lys-412 lines the glutathione pocket. His-459 contributes to the FAD binding site. The Proton acceptor role is filled by His-459.

The protein belongs to the class-I pyridine nucleotide-disulfide oxidoreductase family. Homodimer. It depends on FAD as a cofactor.

The protein resides in the cytoplasm. Its subcellular location is the mitochondrion. The enzyme catalyses 2 glutathione + NADP(+) = glutathione disulfide + NADPH + H(+). Functionally, catalyzes the reduction of glutathione disulfide (GSSG) to reduced glutathione (GSH). Constitutes the major mechanism to maintain a high GSH:GSSG ratio in the cytosol. The chain is Glutathione reductase (GLR1) from Yarrowia lipolytica (strain CLIB 122 / E 150) (Yeast).